The sequence spans 193 residues: ATP-dependent Clp protease proteolytic subunit 2 (193 aa).

Serine 98 acts as the Nucleophile in catalysis. The active site involves histidine 123.

This sequence belongs to the peptidase S14 family. As to quaternary structure, fourteen ClpP subunits assemble into 2 heptameric rings which stack back to back to give a disk-like structure with a central cavity, resembling the structure of eukaryotic proteasomes.

Its subcellular location is the cytoplasm. It catalyses the reaction Hydrolysis of proteins to small peptides in the presence of ATP and magnesium. alpha-casein is the usual test substrate. In the absence of ATP, only oligopeptides shorter than five residues are hydrolyzed (such as succinyl-Leu-Tyr-|-NHMec, and Leu-Tyr-Leu-|-Tyr-Trp, in which cleavage of the -Tyr-|-Leu- and -Tyr-|-Trp bonds also occurs).. Cleaves peptides in various proteins in a process that requires ATP hydrolysis. Has a chymotrypsin-like activity. Plays a major role in the degradation of misfolded proteins. The sequence is that of ATP-dependent Clp protease proteolytic subunit 2 from Bacillus anthracis.